We begin with the raw amino-acid sequence, 242 residues long: Glucosamine-6-phosphate deaminase (242 aa).

The Proton acceptor; for enolization step role is filled by D67. N136 functions as the For ring-opening step in the catalytic mechanism. H138 serves as the catalytic Proton acceptor; for ring-opening step. E143 serves as the catalytic For ring-opening step.

Belongs to the glucosamine/galactosamine-6-phosphate isomerase family. NagB subfamily.

The enzyme catalyses alpha-D-glucosamine 6-phosphate + H2O = beta-D-fructose 6-phosphate + NH4(+). It participates in amino-sugar metabolism; N-acetylneuraminate degradation; D-fructose 6-phosphate from N-acetylneuraminate: step 5/5. Its function is as follows. Catalyzes the reversible isomerization-deamination of glucosamine 6-phosphate (GlcN6P) to form fructose 6-phosphate (Fru6P) and ammonium ion. This is Glucosamine-6-phosphate deaminase from Clostridium perfringens (strain ATCC 13124 / DSM 756 / JCM 1290 / NCIMB 6125 / NCTC 8237 / Type A).